A 309-amino-acid polypeptide reads, in one-letter code: tRNA dimethylallyltransferase (309 aa).

An ATP-binding site is contributed by 10-17 (GPTAVGKT). 12–17 (TAVGKT) provides a ligand contact to substrate. The tract at residues 35 to 38 (DSMQ) is interaction with substrate tRNA.

It belongs to the IPP transferase family. In terms of assembly, monomer. The cofactor is Mg(2+).

It carries out the reaction adenosine(37) in tRNA + dimethylallyl diphosphate = N(6)-dimethylallyladenosine(37) in tRNA + diphosphate. In terms of biological role, catalyzes the transfer of a dimethylallyl group onto the adenine at position 37 in tRNAs that read codons beginning with uridine, leading to the formation of N6-(dimethylallyl)adenosine (i(6)A). This is tRNA dimethylallyltransferase from Clostridium botulinum (strain Alaska E43 / Type E3).